The following is a 189-amino-acid chain: ATP synthase subunit b (189 aa).

The helical transmembrane segment at 7–27 (LLIAALAVAPLAHAAEGGFVG) threads the bilayer.

It belongs to the ATPase B chain family. In terms of assembly, F-type ATPases have 2 components, F(1) - the catalytic core - and F(0) - the membrane proton channel. F(1) has five subunits: alpha(3), beta(3), gamma(1), delta(1), epsilon(1). F(0) has three main subunits: a(1), b(2) and c(10-14). The alpha and beta chains form an alternating ring which encloses part of the gamma chain. F(1) is attached to F(0) by a central stalk formed by the gamma and epsilon chains, while a peripheral stalk is formed by the delta and b chains.

It is found in the cell inner membrane. Its function is as follows. F(1)F(0) ATP synthase produces ATP from ADP in the presence of a proton or sodium gradient. F-type ATPases consist of two structural domains, F(1) containing the extramembraneous catalytic core and F(0) containing the membrane proton channel, linked together by a central stalk and a peripheral stalk. During catalysis, ATP synthesis in the catalytic domain of F(1) is coupled via a rotary mechanism of the central stalk subunits to proton translocation. Component of the F(0) channel, it forms part of the peripheral stalk, linking F(1) to F(0). The polypeptide is ATP synthase subunit b (Hyphomonas neptunium (strain ATCC 15444)).